A 189-amino-acid chain; its full sequence is Large ribosomal subunit protein eL18 (189 aa).

It belongs to the eukaryotic ribosomal protein eL18 family.

Its subcellular location is the cytoplasm. This Aedes aegypti (Yellowfever mosquito) protein is Large ribosomal subunit protein eL18 (RpL18).